The chain runs to 71 residues: Paralithocin 2 (71 aa).

The N-terminal stretch at 1 to 23 (MGAAKVLLVVLAVMVAVPNLAEG) is a signal peptide. 4 disulfides stabilise this stretch: Cys29–Cys58, Cys34–Cys54, Cys39–Cys52, and Cys44–Cys55. The residue at position 70 (Arg70) is an Arginine amide; partial.

This sequence belongs to the paralithocin family. In terms of processing, the amidated form is probably the active form.

Has antibacterial activity, mainly against marine Gram-positive bacteria like C.maltaromaticum (MIC=50 uM), C.mobile (MIC=50 uM), C.divergens (MIC=50 uM) and C.funditum (MIC=25 uM) but also against C.glutamicum (MIC=12.5 uM). Has very little or no activity against Gram-negative bacteria. The protein is Paralithocin 2 of Paralithodes camtschaticus (Red king crab).